We begin with the raw amino-acid sequence, 569 residues long: MTAPKIEAVYTVGAYLLDRLAELGVTEIFGVPGDYTLEFLDHIVAHPTIRWVGNANELNAGYAADGYGRLRGISALVTTFGVGELSAANAIAGSYAEHVPVVHIVGAPPKDAQSTHRALHHSLGDGDFEHFIRISSEITCSQANLTTATACKEIDRVLSEVRKHKRPGYILLSTDVARFPTEPPAAPLPGHTDGTSPRALSLFIDAATKLIADKRMTVLADLLVHRLQVVKELETLLTADVVPYATLMWGKSLLDESSPNFLGIYAGAASTEAVRAAIEQAPVLVTAGVVFTDMVSGFFSQRIDPARTIDVGQYQSSVADKVFTPLEMGDALEALASILVRRGVSSPPVELPPGNPTADTPSPTQRLTQQILWDRLCAALTPGNVVLADQGTAFYGMVEHRLPRGVTFIGQPLWGSIGYTLPAALGAGLAHRNRRTVLLLGDGAAQLTIQELGSFYREGLSPVIVVVNNDGYTIERAIHGATAPYNNIARWRWTDIPGALGVANHSSFRAETYGELDEAFAVAAELKDQMVFVEVIVPKLDLPSLLTALTRPAQDSNRIFQLPNPGWDN.

Glutamate 57 provides a ligand contact to thiamine diphosphate. The thiamine pyrophosphate binding stretch occupies residues 392–474 (TAFYGMVEHR…VVVNNDGYTI (83 aa)). Mg(2+) is bound by residues aspartate 442, asparagine 469, and glycine 471.

The protein belongs to the TPP enzyme family. Requires a metal cation as cofactor. The cofactor is thiamine diphosphate.

Its function is as follows. Decarboxylates branched-chain and aromatic alpha-keto acids to aldehydes. This is Alpha-keto-acid decarboxylase (kdc) from Mycobacterium leprae (strain TN).